Consider the following 221-residue polypeptide: MSDGDYDYLIKFLALGDSGVGKTSVLYQYTDGKFNSKFITTVGIDFREKRVVYRANGPDGAVGRGQRIHLQLWDTAGQERFRSLTTAFFRDAMGFLLLFDLTNEQSFLNVRNWISQLQMHAYCENPDIVLCGNKSDLEDQRAVKEEEARELAEKYGIPYFETSAANGTNISHAIEMLLDLIMKRMERCVDKSWIPEGVVRSNGHTSADQLSEEKEKGLCGC.

N-acetylserine is present on S2. The residue at position 2 (S2) is a Phosphoserine. A GTP-binding site is contributed by G16–S24. Positions F38–F46 match the Effector region motif. Residues D74–Q78, N133–D136, and S163–A165 each bind GTP. Cysteines 123 and 188 form a disulfide. 2 S-geranylgeranyl cysteine lipidation sites follow: C219 and C221. C221 bears the Cysteine methyl ester mark.

The protein belongs to the small GTPase superfamily. Rab family. In terms of assembly, binds SYTL1, SYTL2, SLAC2B, MYRIP, SYTL3, SYTL4, SYTL5 and MLPH. Interacts with UNC13D. Interacts with RPH3A and RPH3A. Does not interact with the BLOC-3 complex (heterodimer of HPS1 and HPS4). Interacts (GDP-bound form preferentially) with DENND10. In terms of tissue distribution, detected in melanocytes. Expressed abundantly in the stomach and is predominantly localized at the apical region of gastric-surface mucus cells. Also expressed in the thymus and lung.

It is found in the membrane. Its subcellular location is the melanosome. It localises to the late endosome. The protein localises to the lysosome. It carries out the reaction GTP + H2O = GDP + phosphate + H(+). With respect to regulation, regulated by guanine nucleotide exchange factors (GEFs) which promote the exchange of bound GDP for free GTP, GTPase activating proteins (GAPs) which increase the GTP hydrolysis activity, and GDP dissociation inhibitors which inhibit the dissociation of the nucleotide from the GTPase. Activated by GEFs such as DENND10. Small GTPase which cycles between active GTP-bound and inactive GDP-bound states. In its active state, binds to a variety of effector proteins to regulate homeostasis of late endocytic pathway, including endosomal positioning, maturation and secretion. Plays a role in cytotoxic granule exocytosis in lymphocytes. Required for both granule maturation and granule docking and priming at the immunologic synapse. This chain is Ras-related protein Rab-27A (Rab27a), found in Mus musculus (Mouse).